A 154-amino-acid chain; its full sequence is UPF0756 membrane protein EAT1b_0668 (154 aa).

Helical transmembrane passes span leucine 5–alanine 25, tryptophan 52–phenylalanine 72, proline 82–valine 102, valine 107–lysine 127, and isoleucine 129–valine 149.

The protein belongs to the UPF0756 family.

It localises to the cell membrane. The sequence is that of UPF0756 membrane protein EAT1b_0668 from Exiguobacterium sp. (strain ATCC BAA-1283 / AT1b).